A 469-amino-acid chain; its full sequence is MNPNQKIITIGSICMVVGIISLILQIGNIISIWVSHSIQTGNQNQPETCNQSIITYENNTWVNQTYVNISNTNFVAEQAVAPVALAGNSSLCPISGWAIYSKDNGIRIGSRGDVFVIREPFISCSHLECRTLFLTQGALLNDKHSNGTVKDRSPYRTLMSCPVGEAPSPYNSRFESVAWSASACHDGISWLTVGISGPDNGAVAVLKYNGIITDTIKSWRNNILRTQESECACVNGSCFTVMTDGPSNGQASYKIFKIEKGKVVKSVELNAPNYHYEECSCYPDAGEITCVCRDNWHGSNRPWVSFNQNLEYQIGYICSGVFGDNPRPNDGTGSCGPVSSNGAYGVKGFSFKYGNGVWIGRTKSTSSRSGFEMVWDPNGWTETDSSFSVKQDIVAITDWSGYSGSFVQHPELTGLDCMRPCFWVELIRGRPKENTIWTSGSSISFCGVNSDTVGWSWPDGAELPFTIDK.

Residues Met1–Lys6 lie on the Intravirion side of the membrane. A helical transmembrane segment spans residues Ile7–Gly27. Positions Gly11 to Trp33 are involved in apical transport and lipid raft association. At Asn28–Lys469 the chain is on the virion surface side. Positions His36–Ser90 are hypervariable stalk region. N-linked (GlcNAc...) asparagine; by host glycosylation is found at Asn50, Asn58, Asn63, Asn68, and Asn88. Residues Leu91–Lys469 form a head of neuraminidase region. Intrachain disulfides connect Cys92–Cys417, Cys124–Cys129, Cys184–Cys231, Cys233–Cys238, Cys279–Cys292, Cys281–Cys290, Cys318–Cys335, and Cys421–Cys446. Residue Arg118 participates in substrate binding. N-linked (GlcNAc...) asparagine; by host glycosylation occurs at Asn146. Residue Asp151 is the Proton donor/acceptor of the active site. Residue Arg152 coordinates substrate. The N-linked (GlcNAc...) asparagine; by host glycan is linked to Asn235. Residue Glu277–Glu278 coordinates substrate. Position 293 (Arg293) interacts with substrate. Ca(2+) contacts are provided by Asp294, Gly298, and Asp324. A substrate-binding site is contributed by Arg368. Tyr402 (nucleophile) is an active-site residue.

Belongs to the glycosyl hydrolase 34 family. Homotetramer. The cofactor is Ca(2+). N-glycosylated.

It localises to the virion membrane. The protein resides in the host apical cell membrane. The catalysed reaction is Hydrolysis of alpha-(2-&gt;3)-, alpha-(2-&gt;6)-, alpha-(2-&gt;8)- glycosidic linkages of terminal sialic acid residues in oligosaccharides, glycoproteins, glycolipids, colominic acid and synthetic substrates.. Its activity is regulated as follows. Inhibited by the neuraminidase inhibitors zanamivir (Relenza) and oseltamivir (Tamiflu). These drugs interfere with the release of progeny virus from infected cells and are effective against all influenza strains. Resistance to neuraminidase inhibitors is quite rare. Functionally, catalyzes the removal of terminal sialic acid residues from viral and cellular glycoconjugates. Cleaves off the terminal sialic acids on the glycosylated HA during virus budding to facilitate virus release. Additionally helps virus spread through the circulation by further removing sialic acids from the cell surface. These cleavages prevent self-aggregation and ensure the efficient spread of the progeny virus from cell to cell. Otherwise, infection would be limited to one round of replication. Described as a receptor-destroying enzyme because it cleaves a terminal sialic acid from the cellular receptors. May facilitate viral invasion of the upper airways by cleaving the sialic acid moieties on the mucin of the airway epithelial cells. Likely to plays a role in the budding process through its association with lipid rafts during intracellular transport. May additionally display a raft-association independent effect on budding. Plays a role in the determination of host range restriction on replication and virulence. Sialidase activity in late endosome/lysosome traffic seems to enhance virus replication. This chain is Neuraminidase, found in Aves.